The sequence spans 710 residues: Protein CNGC15a (710 aa).

Transmembrane regions (helical) follow at residues 85-105 (IFLAACLISLFVDPLFFYLPV), 115-135 (SIGLEVSLTIIRTFVDAFYII), 174-194 (LWSDLVAALPLPQVLIWAVIP), 207-226 (VVRLVSIFQYLLRLYLIYPL), 248-268 (YLTLYMLASHVLGSTWYLLSI), and 368-388 (AEINFAVIVAILGLVLFALLI). 474 to 559 (LFDQMDDRML…WALDPRPTAV (86 aa)) provides a ligand contact to a nucleoside 3',5'-cyclic phosphate.

This sequence belongs to the cyclic nucleotide-gated cation channel (TC 1.A.1.5) family. As to quaternary structure, interacts (via N-terminus) with DMI1 (via c-terminus). The Nod factor has no effect on this interaction, implying that the complex is maintained after activation. Expressed in roots, stems, leaves, flowers and pods.

It localises to the nucleus membrane. Its function is as follows. Cyclic nucleotide-gated channel involved in the establishment of both rhizobial and mycorrhizal associations. Required for full activation of nuclear-localized Ca(2+) oscillations by Nod and Myc factors. Simultaneous activation of the K(+)-permeable channel DMI1 and the Ca(2+) channel CNGC15 can give rise to sustained Ca(2+) oscillations. May function during fertilization in both female and male gametophytic Ca(2+) signaling. In Medicago truncatula (Barrel medic), this protein is Protein CNGC15a.